The primary structure comprises 461 residues: Coagulation factor IX (461 aa).

Residues 1–28 (MQRVNMIMAESPGLITICLLGYLLSAEC) form the signal peptide. A propeptide spanning residues 29–46 (TVFLDHENANKILNRPKR) is cleaved from the precursor. Ca(2+) is bound by residues Tyr47, Asn48, Glu53, Glu54, Glu61, Glu63, Glu66, Glu67, Glu72, Glu73, and Glu76. Residues 47–92 (YNSGKLEEFVQGNLERECMEEKCSFEEAREVFENTERTTEFWKQYV) enclose the Gla domain. 4-carboxyglutamate occurs at positions 53, 54, 61, 63, 66, 67, 72, 73, 76, 79, and 82. Glu61 lines the Mg(2+) pocket. Residues Cys64 and Cys69 are joined by a disulfide bond. Glu66 provides a ligand contact to Mg(2+). Residue Glu72 coordinates Mg(2+). Glu76 contributes to the Mg(2+) binding site. Glu82 serves as a coordination point for Ca(2+). Mg(2+) is bound at residue Glu82. Thr85 carries an O-linked (GalNAc...) threonine glycan. Positions 86, 93, 94, and 96 each coordinate Ca(2+). A 4-carboxyglutamate modification is found at Glu86. Residue Glu86 coordinates Mg(2+). Residues 93-129 (DGDQCESNPCLNGGSCKDDINSYECWCPFGFEGKNCE) enclose the EGF-like 1; calcium-binding domain. 10 cysteine pairs are disulfide-bonded: Cys97/Cys108, Cys102/Cys117, Cys119/Cys128, Cys134/Cys145, Cys141/Cys155, Cys157/Cys170, Cys178/Cys335, Cys252/Cys268, Cys382/Cys396, and Cys407/Cys435. An O-linked (Glc...) serine glycan is attached at Ser99. The O-linked (Fuc...) serine glycan is linked to Ser107. 2 residues coordinate Ca(2+): Asp110 and Asp111. At Asp110 the chain carries (3R)-3-hydroxyaspartate. Ser114 bears the Phosphoserine mark. Residues 130–171 (LDVTCNIKNGRCEQFCKNSADNKVVCSCTEGYRLAENQKSCE) enclose the EGF-like 2 domain. Positions 192–226 (AETVFPDVDYVNSTEAETILDNITQSTQSFNDFTR) are cleaved as a propeptide — activation peptide. Residue Tyr201 is modified to Sulfotyrosine. Position 204 is a phosphoserine (Ser204). Position 205 is a phosphothreonine; alternate (Thr205). An O-linked (GalNAc...) threonine; alternate glycan is attached at Thr205. An N-linked (GlcNAc...) asparagine glycan is attached at Asn213. 2 O-linked (GalNAc...) threonine glycosylation sites follow: Thr215 and Thr225. In terms of domain architecture, Peptidase S1 spans 227-459 (VVGGEDAKPG…YVNWIKEKTK (233 aa)). His267 functions as the Charge relay system in the catalytic mechanism. Residues Glu281, Asn283, Glu286, Glu288, and Glu291 each contribute to the Ca(2+) site. Asp315 acts as the Charge relay system in catalysis. Ser411 acts as the Charge relay system in catalysis.

This sequence belongs to the peptidase S1 family. As to quaternary structure, heterodimer of a light chain and a heavy chain; disulfide-linked. Interacts (inactive and activated) with F11 (activated) in calcium-dependent manner. Interacts with SERPINC1. Activated by factor XIa, which excises the activation peptide. The propeptide can also be removed by snake venom protease. In terms of processing, the iron and 2-oxoglutarate dependent 3-hydroxylation of aspartate and asparagine is (R) stereospecific within EGF domains. Activated by coagulation factor VIIa-tissue factor (F7-F3) complex in calcium-dependent manner. Post-translationally, predominantly O-glucosylated at Ser-99 by POGLUT1 in vitro.

It is found in the secreted. It catalyses the reaction Selective cleavage of Arg-|-Ile bond in factor X to form factor Xa.. Functionally, factor IX is a vitamin K-dependent plasma protein that participates in the intrinsic pathway of blood coagulation by converting factor X to its active form in the presence of Ca(2+) ions, phospholipids, and factor VIIIa. The sequence is that of Coagulation factor IX (F9) from Pan troglodytes (Chimpanzee).